The primary structure comprises 262 residues: Indole-3-glycerol phosphate synthase (262 aa).

Belongs to the TrpC family.

The enzyme catalyses 1-(2-carboxyphenylamino)-1-deoxy-D-ribulose 5-phosphate + H(+) = (1S,2R)-1-C-(indol-3-yl)glycerol 3-phosphate + CO2 + H2O. It participates in amino-acid biosynthesis; L-tryptophan biosynthesis; L-tryptophan from chorismate: step 4/5. The protein is Indole-3-glycerol phosphate synthase of Bordetella pertussis (strain Tohama I / ATCC BAA-589 / NCTC 13251).